The sequence spans 422 residues: Probable tRNA pseudouridine synthase D (422 aa).

Catalysis depends on Asp-83, which acts as the Nucleophile. The region spanning 164-386 (GFPNYFGSQR…AGGRRELLIK (223 aa)) is the TRUD domain.

It belongs to the pseudouridine synthase TruD family.

It carries out the reaction uridine(13) in tRNA = pseudouridine(13) in tRNA. In terms of biological role, could be responsible for synthesis of pseudouridine from uracil-13 in transfer RNAs. This is Probable tRNA pseudouridine synthase D from Thermococcus sibiricus (strain DSM 12597 / MM 739).